The primary structure comprises 1034 residues: Multidrug export protein AcrF (1034 aa).

Residues 1–9 (MANFFIRRP) lie on the Cytoplasmic side of the membrane. A helical transmembrane segment spans residues 10–28 (IFAWVLAIILMMAGALAIL). Residues 29–339 (QLPVAQYPTI…TPFVQLSIHE (311 aa)) are Periplasmic-facing. A helical transmembrane segment spans residues 340-359 (VVKTLFEAIMLVFLVMYLFL). Topologically, residues 360–365 (QNMRAT) are cytoplasmic. Residues 366–385 (LIPTIAVPVVLLGTFAILAA) form a helical membrane-spanning segment. Over 386 to 391 (FGYSIN) the chain is Periplasmic. A helical membrane pass occupies residues 392–413 (TLTMFGMVLAIGLLVDDAIVVV). Topologically, residues 414–441 (ENVERVMMEDKLPPKEATEKSMSQIQGA) are cytoplasmic. The helical transmembrane segment at 442-460 (LVGIAMVLSAVFIPMAFFG) threads the bilayer. Residues 461-473 (GSTGAIYRQFSIT) are Periplasmic-facing. The chain crosses the membrane as a helical span at residues 474 to 496 (IVSAMALSVLVALILTPALCATL). Over 497-537 (LKPVSAEHHENKGGFFGWFNTTFDHSVNHYTNSVGKILGST) the chain is Cytoplasmic. Residues 538-556 (GRYLLIYALIVAGMVVLFL) traverse the membrane as a helical segment. Residues 557–871 (RLPSSFLPEE…SYQERLSGNQ (315 aa)) lie on the Periplasmic side of the membrane. Residues 872–891 (APALVAISFVVVFLCLAALY) form a helical membrane-spanning segment. Over 892-897 (ESWSIP) the chain is Cytoplasmic. The chain crosses the membrane as a helical span at residues 898 to 917 (VSVMLVVPLGIVGVLLAATL). Residues 918–923 (FNQKND) lie on the Periplasmic side of the membrane. A helical transmembrane segment spans residues 924–945 (VYFMVGLLTTIGLSAKNAILIV). The Cytoplasmic segment spans residues 946 to 973 (EFAKDLMEKEGKGVVEATLMAVRMRLRP). The helical transmembrane segment at 974–992 (ILMTSLAFILGVLPLAISN) threads the bilayer. Over 993-1005 (GAGSGAQNAVGIG) the chain is Periplasmic. The chain crosses the membrane as a helical span at residues 1006 to 1028 (VMGGMVSATLLAIFFVPVFFVVI). The Cytoplasmic segment spans residues 1029–1034 (RRCFKG).

This sequence belongs to the resistance-nodulation-cell division (RND) (TC 2.A.6) family. In terms of assembly, part of the tripartite efflux system AcrEF-TolC, which is composed of an inner membrane transporter, AcrF, a periplasmic membrane fusion protein, AcrE, and an outer membrane component, TolC. The complex forms a large protein conduit and can translocate molecules across both the inner and outer membranes.

The protein localises to the cell inner membrane. Part of the tripartite efflux system AcrEF-TolC. Involved in the efflux of indole and organic solvents. The polypeptide is Multidrug export protein AcrF (acrF) (Escherichia coli (strain K12)).